Here is a 2215-residue protein sequence, read N- to C-terminus: Unconventional myosin-VIIa (2215 aa).

The 677-residue stretch at H65–D741 folds into the Myosin motor domain. G158–T165 lines the ATP pocket. The interval F632 to N639 is actin-binding. IQ domains lie at T745–L765, K768–G788, R791–R811, R814–R834, and L837–Q857. The interval R858 to E935 is SAH. Residues Y1017–K1253 form the MyTH4 1 domain. In terms of domain architecture, FERM 1 spans I1258–R1602. A Phosphoserine modification is found at S1569. T1571 is modified (phosphothreonine). In terms of domain architecture, SH3 spans K1603–T1672. In terms of domain architecture, MyTH4 2 spans H1747–Q1896. Residues I1902–M2205 enclose the FERM 2 domain.

This sequence belongs to the TRAFAC class myosin-kinesin ATPase superfamily. Myosin family. As to quaternary structure, might homodimerize in a two headed molecule through the formation of a coiled-coil rod. Identified in a complex with USH1C and USH1G. Interacts with MYRIP. Interacts with RPE65. Interacts with CIB2. May interact with CALM. Interacts with WHRN. Interacts with PLEKHB1 (via PH domain). Interacts with PCDH15. Interacts with TWF2. Interacts with USH1G. Interacts with MYH9. Interacts (via MyTH4-FERM domains) with cytoplasmic regions of ADGRV1 and USH2A. Interacts with PDZD7 (via MyTH4-FERM domains). Interacts with CALML4. As to expression, expressed in the pigment epithelium and the photoreceptor cells of the retina. Also found in kidney, liver, testis, cochlea, lymphocytes. Not expressed in brain.

It is found in the cytoplasm. Its subcellular location is the cell cortex. It localises to the cytoskeleton. The protein resides in the synapse. With respect to regulation, ATP hydrolysis is inhibited by Mg(2+), already at a concentration of 0.4 mM. In terms of biological role, myosins are actin-based motor molecules with ATPase activity. Unconventional myosins serve in intracellular movements. Their highly divergent tails bind to membranous compartments, which are then moved relative to actin filaments. In the retina, plays an important role in the renewal of the outer photoreceptor disks. Plays an important role in the distribution and migration of retinal pigment epithelial (RPE) melanosomes and phagosomes, and in the regulation of opsin transport in retinal photoreceptors. In the inner ear, plays an important role in differentiation, morphogenesis and organization of cochlear hair cell bundles. Involved in hair-cell vesicle trafficking of aminoglycosides, which are known to induce ototoxicity. Motor protein that is a part of the functional network formed by USH1C, USH1G, CDH23 and MYO7A that mediates mechanotransduction in cochlear hair cells. Required for normal hearing. The polypeptide is Unconventional myosin-VIIa (Homo sapiens (Human)).